The chain runs to 155 residues: MLPFKLWVDADALPKILREVILRASDRYQLEVIFVANQNVGITPSVRIKSLQVLSGADQADQEIVNRMSENDIVITQDIPLAAQVIEKGGIAIHPRGEVYTTANVKARLHLRDFMDTLRGAGVQTGGPPPISERDKREFSSALDQTILKQKRKTA.

The tract at residues 120–155 (GAGVQTGGPPPISERDKREFSSALDQTILKQKRKTA) is disordered.

It belongs to the UPF0178 family.

The protein is UPF0178 protein ACICU_02858 of Acinetobacter baumannii (strain ACICU).